A 351-amino-acid chain; its full sequence is Photosystem II D2 protein (351 aa).

Residues 39 to 59 (CSYLALGGWLTGTTFVTSWYT) traverse the membrane as a helical segment. Residue histidine 116 coordinates chlorophyll a. A helical membrane pass occupies residues 123 to 139 (GFCLRQFEIARLVGIRP). Pheophytin a is bound by residues glutamine 128 and asparagine 141. Residues 151–164 (VFVSVFLMYPLGQA) traverse the membrane as a helical segment. Histidine 196 provides a ligand contact to chlorophyll a. Residues 206 to 226 (GALLCAIHGATVQNTLFEDGD) form a helical membrane-spanning segment. Residues histidine 213 and phenylalanine 260 each contribute to the a plastoquinone site. Residue histidine 213 coordinates Fe cation. A Fe cation-binding site is contributed by histidine 267. A helical membrane pass occupies residues 277–293 (GLWTSAFGIVGLALNLR).

Belongs to the reaction center PufL/M/PsbA/D family. In terms of assembly, PSII is composed of 1 copy each of membrane proteins PsbA, PsbB, PsbC, PsbD, PsbE, PsbF, PsbH, PsbI, PsbJ, PsbK, PsbL, PsbM, PsbT, PsbX, PsbY, PsbZ, Psb30/Ycf12, at least 3 peripheral proteins of the oxygen-evolving complex and a large number of cofactors. It forms dimeric complexes. The cofactor is The D1/D2 heterodimer binds P680, chlorophylls that are the primary electron donor of PSII, and subsequent electron acceptors. It shares a non-heme iron and each subunit binds pheophytin, quinone, additional chlorophylls, carotenoids and lipids. There is also a Cl(-1) ion associated with D1 and D2, which is required for oxygen evolution. The PSII complex binds additional chlorophylls, carotenoids and specific lipids..

The protein resides in the plastid. It is found in the chloroplast thylakoid membrane. It carries out the reaction 2 a plastoquinone + 4 hnu + 2 H2O = 2 a plastoquinol + O2. Functionally, photosystem II (PSII) is a light-driven water:plastoquinone oxidoreductase that uses light energy to abstract electrons from H(2)O, generating O(2) and a proton gradient subsequently used for ATP formation. It consists of a core antenna complex that captures photons, and an electron transfer chain that converts photonic excitation into a charge separation. The D1/D2 (PsbA/PsbD) reaction center heterodimer binds P680, the primary electron donor of PSII as well as several subsequent electron acceptors. D2 is needed for assembly of a stable PSII complex. This Gracilaria tenuistipitata var. liui (Red alga) protein is Photosystem II D2 protein.